The sequence spans 172 residues: Methylated-DNA--protein-cysteine methyltransferase (172 aa).

C142 functions as the Nucleophile; methyl group acceptor in the catalytic mechanism.

This sequence belongs to the MGMT family.

It localises to the cytoplasm. The enzyme catalyses a 6-O-methyl-2'-deoxyguanosine in DNA + L-cysteinyl-[protein] = S-methyl-L-cysteinyl-[protein] + a 2'-deoxyguanosine in DNA. It catalyses the reaction a 4-O-methyl-thymidine in DNA + L-cysteinyl-[protein] = a thymidine in DNA + S-methyl-L-cysteinyl-[protein]. In terms of biological role, involved in the cellular defense against the biological effects of O6-methylguanine (O6-MeG) and O4-methylthymine (O4-MeT) in DNA. Repairs the methylated nucleobase in DNA by stoichiometrically transferring the methyl group to a cysteine residue in the enzyme. This is a suicide reaction: the enzyme is irreversibly inactivated. The polypeptide is Methylated-DNA--protein-cysteine methyltransferase (Pyrococcus horikoshii (strain ATCC 700860 / DSM 12428 / JCM 9974 / NBRC 100139 / OT-3)).